Consider the following 459-residue polypeptide: GTPase Der (459 aa).

2 consecutive EngA-type G domains span residues Pro-4–Ala-169 and Ile-179–Arg-355. Residues Gly-10–Ser-17, Asp-57–Leu-61, Asn-120–Glu-123, Gly-185–Ser-192, Asp-232–Ile-236, and Asn-297–Asp-300 contribute to the GTP site. Residues Lys-356–Ser-441 form the KH-like domain.

It belongs to the TRAFAC class TrmE-Era-EngA-EngB-Septin-like GTPase superfamily. EngA (Der) GTPase family. As to quaternary structure, associates with the 50S ribosomal subunit.

Its function is as follows. GTPase that plays an essential role in the late steps of ribosome biogenesis. This chain is GTPase Der, found in Synechococcus sp. (strain JA-3-3Ab) (Cyanobacteria bacterium Yellowstone A-Prime).